The chain runs to 78 residues: Small ribosomal subunit protein uS17 (78 aa).

This sequence belongs to the universal ribosomal protein uS17 family. Part of the 30S ribosomal subunit.

One of the primary rRNA binding proteins, it binds specifically to the 5'-end of 16S ribosomal RNA. This Sinorhizobium medicae (strain WSM419) (Ensifer medicae) protein is Small ribosomal subunit protein uS17.